Reading from the N-terminus, the 546-residue chain is Probable acyl-activating enzyme 21 (546 aa).

The protein belongs to the ATP-dependent AMP-binding enzyme family.

In terms of biological role, may act as an acid--thiol ligase that activates carboxylic acids by forming acyl-CoAs. In Arabidopsis thaliana (Mouse-ear cress), this protein is Probable acyl-activating enzyme 21 (AEE21).